The sequence spans 360 residues: Protein MGF 360-1L (360 aa).

It belongs to the asfivirus MGF 360 family.

Plays a role in virus cell tropism, and may be required for efficient virus replication in macrophages. The sequence is that of Protein MGF 360-1L from Ornithodoros (relapsing fever ticks).